The chain runs to 90 residues: Small ribosomal subunit protein bS20 (90 aa).

Residues 1-10 (MANHKSTQKS) show a composition bias toward polar residues. Residues 1-25 (MANHKSTQKSIRQDQKRNLINKSRK) form a disordered region.

Belongs to the bacterial ribosomal protein bS20 family.

Functionally, binds directly to 16S ribosomal RNA. This Orientia tsutsugamushi (strain Ikeda) (Rickettsia tsutsugamushi) protein is Small ribosomal subunit protein bS20.